The chain runs to 54 residues: Photosystem II reaction center protein L (54 aa).

The helical transmembrane segment at 33–53 (SLFWGLLLIFVLAVLFSSYIF) threads the bilayer.

It belongs to the PsbL family. In terms of assembly, PSII is composed of 1 copy each of membrane proteins PsbA, PsbB, PsbC, PsbD, PsbE, PsbF, PsbH, PsbI, PsbJ, PsbK, PsbL, PsbM, PsbT, PsbX, PsbY, PsbZ, Psb30/Ycf12, at least 3 peripheral proteins of the oxygen-evolving complex and a large number of cofactors. It forms dimeric complexes.

The protein localises to the plastid. The protein resides in the chloroplast thylakoid membrane. Its function is as follows. One of the components of the core complex of photosystem II (PSII). PSII is a light-driven water:plastoquinone oxidoreductase that uses light energy to abstract electrons from H(2)O, generating O(2) and a proton gradient subsequently used for ATP formation. It consists of a core antenna complex that captures photons, and an electron transfer chain that converts photonic excitation into a charge separation. This subunit is found at the monomer-monomer interface and is required for correct PSII assembly and/or dimerization. In Stigeoclonium helveticum (Green alga), this protein is Photosystem II reaction center protein L.